Here is a 451-residue protein sequence, read N- to C-terminus: Oxygen-independent coproporphyrinogen III oxidase (451 aa).

The Radical SAM core domain occupies 45–278; sequence IPAGAAISLY…FETARELFLA (234 aa). Residue Tyr-54 participates in S-adenosyl-L-methionine binding. Positions 60 and 64 each coordinate [4Fe-4S] cluster. Phe-66 serves as a coordination point for S-adenosyl-L-methionine. Cys-67 contacts [4Fe-4S] cluster. Residues Gly-111, 112-113, Glu-144, Gln-171, Arg-183, Asp-208, Ala-242, and Ile-328 each bind S-adenosyl-L-methionine; that span reads GT.

This sequence belongs to the anaerobic coproporphyrinogen-III oxidase family. As to quaternary structure, monomer. Requires [4Fe-4S] cluster as cofactor.

The protein resides in the cytoplasm. It carries out the reaction coproporphyrinogen III + 2 S-adenosyl-L-methionine = protoporphyrinogen IX + 2 5'-deoxyadenosine + 2 L-methionine + 2 CO2. The protein operates within porphyrin-containing compound metabolism; protoporphyrin-IX biosynthesis; protoporphyrinogen-IX from coproporphyrinogen-III (AdoMet route): step 1/1. Functionally, involved in the heme biosynthesis. Catalyzes the anaerobic oxidative decarboxylation of propionate groups of rings A and B of coproporphyrinogen III to yield the vinyl groups in protoporphyrinogen IX. The chain is Oxygen-independent coproporphyrinogen III oxidase (hemN) from Paracoccus denitrificans (strain Pd 1222).